The following is a 363-amino-acid chain: Flagellar P-ring protein 2 (363 aa).

The N-terminal stretch at 1 to 18 (MLIRLLLLVICLAGPGVA) is a signal peptide.

This sequence belongs to the FlgI family. In terms of assembly, the basal body constitutes a major portion of the flagellar organelle and consists of four rings (L,P,S, and M) mounted on a central rod.

It is found in the periplasm. Its subcellular location is the bacterial flagellum basal body. Assembles around the rod to form the L-ring and probably protects the motor/basal body from shearing forces during rotation. This Cereibacter sphaeroides (strain ATCC 17023 / DSM 158 / JCM 6121 / CCUG 31486 / LMG 2827 / NBRC 12203 / NCIMB 8253 / ATH 2.4.1.) (Rhodobacter sphaeroides) protein is Flagellar P-ring protein 2.